The sequence spans 442 residues: CBL-interacting serine/threonine-protein kinase 14 (442 aa).

In terms of domain architecture, Protein kinase spans 22-276 (YEVGKLVGCG…IEEIIHDPWF (255 aa)). ATP contacts are provided by residues 28-36 (VGCGAFAKV) and lysine 51. Catalysis depends on aspartate 144, which acts as the Proton acceptor. The tract at residues 162–191 (DFGLSALTDQIRPDGLLHTLCGTPAYVAPE) is activation loop. Residue serine 166 is modified to Phosphoserine. The residue at position 180 (threonine 180) is a Phosphothreonine. One can recognise an NAF domain in the interval 305–329 (MGARRMNAFDIISGSPGFNLSGLFG). The PPI stretch occupies residues 335–365 (DRVERFVSAWTAERVVERLEEIVSAENLTVA).

It belongs to the protein kinase superfamily. CAMK Ser/Thr protein kinase family. SNF1 subfamily. In terms of assembly, interacts with CBL2. Interacts with CBL3. Interacts with CBL8. Interacts with CBL9. Interacts with KIN10 and KIN11. Requires Mn(2+) as cofactor. In terms of tissue distribution, predominant in roots, cauline leaves, and flowers. Ubiquitous with highest expression in 7-day-old seedlings and flower buds, followed by that in cauline leaves and young siliques.

It is found in the cytoplasm. The protein localises to the nucleus. The catalysed reaction is L-seryl-[protein] + ATP = O-phospho-L-seryl-[protein] + ADP + H(+). It catalyses the reaction L-threonyl-[protein] + ATP = O-phospho-L-threonyl-[protein] + ADP + H(+). Functionally, CIPK serine-threonine protein kinases interact with CBL proteins. Binding of a CBL protein to the regulatory NAF domain of CIPK protein lead to the activation of the kinase in a calcium-dependent manner. The polypeptide is CBL-interacting serine/threonine-protein kinase 14 (CIPK14) (Arabidopsis thaliana (Mouse-ear cress)).